A 150-amino-acid chain; its full sequence is MKTIDARKLDIKREWYVIDATGKNLGRLATLIANILRGKHKPYFQPDVDVGDFVIVLNADKITVTGKKLTDKEYKWHTNRPGGLNVRTLQWMLEHKPEEVIRLAVERMLPKNKLQKRFMKRLKVYTGSEHKHQAQNPKNLEELKALWKNF.

This sequence belongs to the universal ribosomal protein uL13 family. Part of the 50S ribosomal subunit.

Its function is as follows. This protein is one of the early assembly proteins of the 50S ribosomal subunit, although it is not seen to bind rRNA by itself. It is important during the early stages of 50S assembly. The protein is Large ribosomal subunit protein uL13 of Persephonella marina (strain DSM 14350 / EX-H1).